The sequence spans 315 residues: Cysteine proteinase 2 (315 aa).

An N-terminal signal peptide occupies residues 1 to 13 (MFAFICLLAIASA). Residues 14–93 (IDFNTWASKN…NGQVKYLNIQ (80 aa)) constitute a propeptide, activation peptide. Disulfide bonds link cysteine 115/cysteine 161 and cysteine 152/cysteine 193. Cysteine 118 is an active-site residue. Residues histidine 259 and asparagine 279 contribute to the active site.

This sequence belongs to the peptidase C1 family. In terms of assembly, interacts with cysteine protease inhibitor ICP1. Interacts with cysteine protease inhibitor ICP2.

The protein localises to the cell membrane. The protein resides in the cytoplasmic vesicle. It is found in the phagosome. It localises to the secreted. The catalysed reaction is Hydrolysis of proteins, including basement membrane collagen and azocasein. Preferential cleavage: Arg-Arg-|-Xaa in small molecule substrates including Z-Arg-Arg-|-NHMec.. Inhibited by cysteine protease inhibitors ICP1 and ICP2. Inhibited by leupeptin and such inhibitors of cysteine proteinases as L-transepoxysuccinyl-L-leucylamido-(4-guanidino)butane, peptidyldiazomethanes, iodoacetic acid and chicken cystatin. Functionally, cysteine protease which degrades matrix proteins such as collagen, laminin and fibronectin and thus is involved in the destruction of human tissue. Can abolish adhesion. May play an important role in pathogenicity. The protein is Cysteine proteinase 2 of Entamoeba histolytica (strain ATCC 30459 / HM-1:IMSS / ABRM).